The sequence spans 289 residues: tRNA-cytidine(32) 2-sulfurtransferase (289 aa).

A PP-loop motif motif is present at residues 39–44; that stretch reads SGGKDS. Cysteine 114, cysteine 117, and cysteine 205 together coordinate [4Fe-4S] cluster.

This sequence belongs to the TtcA family. Homodimer. The cofactor is Mg(2+). [4Fe-4S] cluster serves as cofactor.

It is found in the cytoplasm. It carries out the reaction cytidine(32) in tRNA + S-sulfanyl-L-cysteinyl-[cysteine desulfurase] + AH2 + ATP = 2-thiocytidine(32) in tRNA + L-cysteinyl-[cysteine desulfurase] + A + AMP + diphosphate + H(+). It participates in tRNA modification. Catalyzes the ATP-dependent 2-thiolation of cytidine in position 32 of tRNA, to form 2-thiocytidine (s(2)C32). The sulfur atoms are provided by the cysteine/cysteine desulfurase (IscS) system. This chain is tRNA-cytidine(32) 2-sulfurtransferase, found in Deinococcus geothermalis (strain DSM 11300 / CIP 105573 / AG-3a).